The chain runs to 338 residues: Ketol-acid reductoisomerase (NADP(+)) (338 aa).

A KARI N-terminal Rossmann domain is found at 1-181; the sequence is MKVYYDKDAD…GGTKGGVIET (181 aa). NADP(+)-binding positions include 24 to 27, Arg47, and Ser52; that span reads YGSQ. The active site involves His107. Gly133 is a binding site for NADP(+). The KARI C-terminal knotted domain occupies 182–327; sequence NFREETETDL…GQLRDMMPWI (146 aa). Residues Asp190, Glu194, Glu226, and Glu230 each contribute to the Mg(2+) site. Ser251 serves as a coordination point for substrate.

Belongs to the ketol-acid reductoisomerase family. Requires Mg(2+) as cofactor.

It carries out the reaction (2R)-2,3-dihydroxy-3-methylbutanoate + NADP(+) = (2S)-2-acetolactate + NADPH + H(+). The catalysed reaction is (2R,3R)-2,3-dihydroxy-3-methylpentanoate + NADP(+) = (S)-2-ethyl-2-hydroxy-3-oxobutanoate + NADPH + H(+). Its pathway is amino-acid biosynthesis; L-isoleucine biosynthesis; L-isoleucine from 2-oxobutanoate: step 2/4. The protein operates within amino-acid biosynthesis; L-valine biosynthesis; L-valine from pyruvate: step 2/4. Its function is as follows. Involved in the biosynthesis of branched-chain amino acids (BCAA). Catalyzes an alkyl-migration followed by a ketol-acid reduction of (S)-2-acetolactate (S2AL) to yield (R)-2,3-dihydroxy-isovalerate. In the isomerase reaction, S2AL is rearranged via a Mg-dependent methyl migration to produce 3-hydroxy-3-methyl-2-ketobutyrate (HMKB). In the reductase reaction, this 2-ketoacid undergoes a metal-dependent reduction by NADPH to yield (R)-2,3-dihydroxy-isovalerate. The sequence is that of Ketol-acid reductoisomerase (NADP(+)) from Dechloromonas aromatica (strain RCB).